We begin with the raw amino-acid sequence, 122 residues long: LOB domain-containing protein 5 (122 aa).

Residues 8–109 form the LOB domain; it reads RPCSVCITKN…AYLRELQEKI (102 aa).

This sequence belongs to the LOB domain-containing protein family.

In Arabidopsis thaliana (Mouse-ear cress), this protein is LOB domain-containing protein 5 (LBD5).